The primary structure comprises 68 residues: Large ribosomal subunit protein uL29 (68 aa).

This sequence belongs to the universal ribosomal protein uL29 family.

This chain is Large ribosomal subunit protein uL29, found in Prochlorococcus marinus (strain SARG / CCMP1375 / SS120).